A 64-amino-acid polypeptide reads, in one-letter code: MATVIVEGDFEKALKKFKKIIEKEGILTEYKRREFYEKPSVKRKRKERAARKRLIKALKKKGLL.

Belongs to the bacterial ribosomal protein bS21 family.

The polypeptide is Small ribosomal subunit protein bS21 (Sulfurihydrogenibium sp. (strain YO3AOP1)).